A 246-amino-acid polypeptide reads, in one-letter code: uncharacterized protein (246 aa).

The signal sequence occupies residues 1-24 (MGAPLRHCLLVAAALSLGCGVAAA). 2 helical membrane passes run 71–91 (YYLG…IGLV) and 104–124 (FTCA…AGGA).

The protein localises to the cell membrane. This is an uncharacterized protein from Mycobacterium tuberculosis (strain ATCC 25618 / H37Rv).